Consider the following 308-residue polypeptide: Staphylococcal superantigen-like 4 (308 aa).

The N-terminal stretch at M1–A30 is a signal peptide. Residues A28–N117 form a disordered region. 2 stretches are compositionally biased toward polar residues: residues P33–S47 and S55–A76. The span at T77 to P93 shows a compositional bias: low complexity. Residues Q94–T114 show a composition bias toward polar residues. The tract at residues V180–Y278 is sialyl Lewis X-binding.

It belongs to the staphylococcal/streptococcal toxin family.

It is found in the secreted. Functionally, secreted protein that plays a role in immune innate response inhibition by interfering with host TLR2-mediated pathway. The chain is Staphylococcal superantigen-like 4 from Staphylococcus aureus (strain Newman).